A 475-amino-acid polypeptide reads, in one-letter code: UDP-glycosyltransferase 1 (475 aa).

The active-site Proton acceptor is H15. H15 contributes to the an anthocyanidin binding site. Residue D117 is the Charge relay of the active site. A345, Q347, H362, W365, N366, S367, and E370 together coordinate UDP-alpha-D-glucose. G385 lines the an anthocyanidin pocket. UDP-alpha-D-glucose-binding residues include E386 and Q387.

It belongs to the UDP-glycosyltransferase family. In terms of tissue distribution, mostly expressed in leaves and flowers, and, to a lower extent, in roots and stems.

It carries out the reaction (20S)-protopanaxadiol + UDP-alpha-D-glucose = (20S)-ginsenoside C-K + UDP + H(+). The catalysed reaction is (20S)-ginsenoside Rg3 + UDP-alpha-D-glucose = (20S)-ginsenoside Rd + UDP + H(+). The enzyme catalyses (20S)-ginsenoside Rh2 + UDP-alpha-D-glucose = (20S)-ginsenoside F2 + UDP + H(+). It catalyses the reaction (20S)-protopanaxatriol + UDP-alpha-D-glucose = (20S)-ginsenoside F1 + UDP + H(+). It carries out the reaction dammarenediol-II + UDP-alpha-D-glucose = (20S)-20-O-(beta-D-glucosyl)-3-hydroxydammarene + UDP + H(+). It functions in the pathway secondary metabolite biosynthesis; terpenoid biosynthesis. Its function is as follows. Component of the dammarane-type triterpene saponins (e.g. ginsenosides or panaxosides) biosynthetic pathway. Glycosyltransferase that catalyzes the biosynthesis of ginsenoside F1 from protopanaxatriol (PPT). Triggers C20-OH glycosylation of ginsenoside Rg3 to produce ginsenoside Rd. Mediates the conversion of protopanaxadiol (PPD) to the ginsenoside compound K. catalyzes the production of 20S-O-beta-(D-glucosyl)-dammarenediol II form dammarenediol II (DM). This is UDP-glycosyltransferase 1 from Panax ginseng (Korean ginseng).